The primary structure comprises 73 residues: DNA-directed RNA polymerase subunit epsilon (73 aa).

Belongs to the RNA polymerase subunit epsilon family. RNAP is composed of a core of 2 alpha, a beta and a beta' subunit. The core is associated with a delta subunit, and at least one of epsilon or omega. When a sigma factor is associated with the core the holoenzyme is formed, which can initiate transcription.

The catalysed reaction is RNA(n) + a ribonucleoside 5'-triphosphate = RNA(n+1) + diphosphate. A non-essential component of RNA polymerase (RNAP). This Lactobacillus acidophilus (strain ATCC 700396 / NCK56 / N2 / NCFM) protein is DNA-directed RNA polymerase subunit epsilon.